The chain runs to 436 residues: Chromosomal replication initiator protein DnaA (436 aa).

Residues 1–69 (MLADEVIELL…ANIFEVKTGI (69 aa)) form a domain I, interacts with DnaA modulators region. The domain II stretch occupies residues 69 to 99 (IKPVISITTQKNRVSIKAKDIDVKQIRTQSS). The interval 100–314 (LLNPSYTFES…SAIININAFA (215 aa)) is domain III, AAA+ region. Residues glycine 144, glycine 146, lysine 147, and threonine 148 each coordinate ATP. The domain IV, binds dsDNA stretch occupies residues 315-436 (NIMRQEITLE…ELKNKITSKE (122 aa)).

It belongs to the DnaA family. As to quaternary structure, oligomerizes as a right-handed, spiral filament on DNA at oriC.

It localises to the cytoplasm. Functionally, plays an essential role in the initiation and regulation of chromosomal replication. ATP-DnaA binds to the origin of replication (oriC) to initiate formation of the DNA replication initiation complex once per cell cycle. Binds the DnaA box (a 9 base pair repeat at the origin) and separates the double-stranded (ds)DNA. Forms a right-handed helical filament on oriC DNA; dsDNA binds to the exterior of the filament while single-stranded (ss)DNA is stabiized in the filament's interior. The ATP-DnaA-oriC complex binds and stabilizes one strand of the AT-rich DNA unwinding element (DUE), permitting loading of DNA polymerase. After initiation quickly degrades to an ADP-DnaA complex that is not apt for DNA replication. Binds acidic phospholipids. This chain is Chromosomal replication initiator protein DnaA, found in Campylobacter fetus subsp. fetus (strain 82-40).